The following is a 126-amino-acid chain: Glycine cleavage system H protein (126 aa).

Positions 22 to 104 constitute a Lipoyl-binding domain; that stretch reads VAYVGITDYA…YGEGWLIKMK (83 aa). K63 carries the post-translational modification N6-lipoyllysine.

It belongs to the GcvH family. As to quaternary structure, the glycine cleavage system is composed of four proteins: P, T, L and H. The cofactor is (R)-lipoate.

Functionally, the glycine cleavage system catalyzes the degradation of glycine. The H protein shuttles the methylamine group of glycine from the P protein to the T protein. This Bacteroides fragilis (strain YCH46) protein is Glycine cleavage system H protein.